The following is a 102-amino-acid chain: NADH-quinone oxidoreductase subunit K (102 aa).

3 consecutive transmembrane segments (helical) span residues 3–23, 31–51, and 66–86; these read IGLT…AFGI, IVLL…LVAF, and FILT…VVYF.

This sequence belongs to the complex I subunit 4L family. NDH-1 is composed of 14 different subunits. Subunits NuoA, H, J, K, L, M, N constitute the membrane sector of the complex.

It localises to the cell inner membrane. The catalysed reaction is a quinone + NADH + 5 H(+)(in) = a quinol + NAD(+) + 4 H(+)(out). NDH-1 shuttles electrons from NADH, via FMN and iron-sulfur (Fe-S) centers, to quinones in the respiratory chain. The immediate electron acceptor for the enzyme in this species is believed to be ubiquinone. Couples the redox reaction to proton translocation (for every two electrons transferred, four hydrogen ions are translocated across the cytoplasmic membrane), and thus conserves the redox energy in a proton gradient. The sequence is that of NADH-quinone oxidoreductase subunit K from Rhodospirillum centenum (strain ATCC 51521 / SW).